The chain runs to 177 residues: Dual-action ribosomal maturation protein DarP (177 aa).

Residues 1-26 (MKIVGDSEHFKQPYDSDEEYVSKTED) form a disordered region.

Belongs to the DarP family.

It is found in the cytoplasm. Its function is as follows. Member of a network of 50S ribosomal subunit biogenesis factors which assembles along the 30S-50S interface, preventing incorrect 23S rRNA structures from forming. Promotes peptidyl transferase center (PTC) maturation. The sequence is that of Dual-action ribosomal maturation protein DarP from Shewanella sp. (strain MR-4).